We begin with the raw amino-acid sequence, 451 residues long: tRNA modification GTPase MnmE (451 aa).

Residues arginine 23, glutamate 80, and lysine 119 each contribute to the (6S)-5-formyl-5,6,7,8-tetrahydrofolate site. The 158-residue stretch at 215 to 372 (GIKVVLAGQP…LRAALLKTAG (158 aa)) folds into the TrmE-type G domain. Asparagine 225 is a K(+) binding site. Residues 225–230 (NVGKSS), 244–250 (TDIPGTT), and 269–272 (DTAG) contribute to the GTP site. Position 229 (serine 229) interacts with Mg(2+). 3 residues coordinate K(+): threonine 244, isoleucine 246, and threonine 249. Threonine 250 is a binding site for Mg(2+). Lysine 451 provides a ligand contact to (6S)-5-formyl-5,6,7,8-tetrahydrofolate.

Belongs to the TRAFAC class TrmE-Era-EngA-EngB-Septin-like GTPase superfamily. TrmE GTPase family. In terms of assembly, homodimer. Heterotetramer of two MnmE and two MnmG subunits. Requires K(+) as cofactor.

It localises to the cytoplasm. Exhibits a very high intrinsic GTPase hydrolysis rate. Involved in the addition of a carboxymethylaminomethyl (cmnm) group at the wobble position (U34) of certain tRNAs, forming tRNA-cmnm(5)s(2)U34. This Nitrosomonas europaea (strain ATCC 19718 / CIP 103999 / KCTC 2705 / NBRC 14298) protein is tRNA modification GTPase MnmE.